The primary structure comprises 475 residues: Ankyrin repeat, SAM and basic leucine zipper domain-containing protein 1 (475 aa).

Residues 1-24 (MAGSLGNLVVAGGGESSDSEEDYW) form a disordered region. A phosphoserine mark is found at S16, S17, and S19. 6 ANK repeats span residues 44 to 73 (ERDE…SVES), 77 to 106 (FGWT…NASF), 109 to 146 (DQYT…VACR), 147 to 176 (KCMT…EINA), 180 to 209 (NGYT…NKTI), and 213 to 242 (DGKT…PLQG). One can recognise an SAM domain in the interval 273 to 336 (TAFGDLEVFL…LDAVKELQVE (64 aa)).

Interacts with DDX4, PIWIL1, RANBP9 and TDRD1.

The protein resides in the cytoplasm. Plays a central role during spermatogenesis by repressing transposable elements and preventing their mobilization, which is essential for the germline integrity. Acts via the piRNA metabolic process, which mediates the repression of transposable elements during meiosis by forming complexes composed of piRNAs and Piwi proteins and governs the methylation and subsequent repression of transposons. Its association with pi-bodies suggests a participation in the primary piRNAs metabolic process. Required prior to the pachytene stage to facilitate the production of multiple types of piRNAs, including those associated with repeats involved in the regulation of retrotransposons. May act by mediating protein-protein interactions during germ cell maturation. This Notamacropus eugenii (Tammar wallaby) protein is Ankyrin repeat, SAM and basic leucine zipper domain-containing protein 1 (ASZ1).